The following is a 483-amino-acid chain: UDP-N-acetylmuramoyl-L-alanyl-D-glutamate--2,6-diaminopimelate ligase (483 aa).

UDP-N-acetyl-alpha-D-muramoyl-L-alanyl-D-glutamate is bound at residue Ser30. 109-115 is an ATP binding site; that stretch reads GTNGKTT. UDP-N-acetyl-alpha-D-muramoyl-L-alanyl-D-glutamate-binding positions include 151-152, Ser178, and Arg186; that span reads TT. An N6-carboxylysine modification is found at Lys218. Residues Arg380, 403-406, Gly453, and Glu457 contribute to the meso-2,6-diaminopimelate site; that span reads DNPR. Residues 403–406 carry the Meso-diaminopimelate recognition motif motif; it reads DNPR.

Belongs to the MurCDEF family. MurE subfamily. Mg(2+) serves as cofactor. In terms of processing, carboxylation is probably crucial for Mg(2+) binding and, consequently, for the gamma-phosphate positioning of ATP.

The protein localises to the cytoplasm. The enzyme catalyses UDP-N-acetyl-alpha-D-muramoyl-L-alanyl-D-glutamate + meso-2,6-diaminopimelate + ATP = UDP-N-acetyl-alpha-D-muramoyl-L-alanyl-gamma-D-glutamyl-meso-2,6-diaminopimelate + ADP + phosphate + H(+). It functions in the pathway cell wall biogenesis; peptidoglycan biosynthesis. In terms of biological role, catalyzes the addition of meso-diaminopimelic acid to the nucleotide precursor UDP-N-acetylmuramoyl-L-alanyl-D-glutamate (UMAG) in the biosynthesis of bacterial cell-wall peptidoglycan. The sequence is that of UDP-N-acetylmuramoyl-L-alanyl-D-glutamate--2,6-diaminopimelate ligase from Chlamydia pneumoniae (Chlamydophila pneumoniae).